We begin with the raw amino-acid sequence, 435 residues long: Temperature-sensitive sn-2 acyl-lipid omega-3 desaturase (ferredoxin), chloroplastic (435 aa).

The transit peptide at 1 to 42 (MASSVLSECGFRPLPRFYPKHTTSFASNPKPTFKFNPPLKPP) directs the protein to the chloroplast. The next 2 membrane-spanning stretches (helical) occupy residues 111-131 (MSYV…AAYF) and 134-154 (WLLW…LFVL). The Histidine box-1 motif lies at 156 to 160 (HDCGH). Residues 192-196 (HRTHH) carry the Histidine box-2 motif. A run of 2 helical transmembrane segments spans residues 268–290 (VLTS…FVMG) and 297–319 (LYGI…HHHG). The Histidine box-3 signature appears at 359-363 (HVIHH).

The protein belongs to the fatty acid desaturase type 1 family.

It is found in the plastid. The protein resides in the chloroplast membrane. It catalyses the reaction a (7Z,10Z)-hexadecadienoyl-containing glycerolipid + 2 reduced [2Fe-2S]-[ferredoxin] + O2 + 2 H(+) = a (7Z,10Z,13Z)-hexadecatrienoyl-containing glycerolipid + 2 oxidized [2Fe-2S]-[ferredoxin] + 2 H2O. It carries out the reaction a (9Z,12Z)-octadecadienoyl-containing glycerolipid + 2 reduced [2Fe-2S]-[ferredoxin] + O2 + 2 H(+) = (9Z,12Z,15Z)-octadecatrienoyl-containing glycerolipid + 2 oxidized [2Fe-2S]-[ferredoxin] + 2 H2O. It functions in the pathway lipid metabolism; polyunsaturated fatty acid biosynthesis. Functionally, chloroplast omega-3 fatty acid desaturase introduces the third double bond in the biosynthesis of 16:3 and 18:3 fatty acids, important constituents of plant membranes. It is thought to use ferredoxin as an electron donor and to act on fatty acids esterified to galactolipids, sulfolipids and phosphatidylglycerol. The sequence is that of Temperature-sensitive sn-2 acyl-lipid omega-3 desaturase (ferredoxin), chloroplastic from Arabidopsis thaliana (Mouse-ear cress).